Here is a 310-residue protein sequence, read N- to C-terminus: HPr kinase/phosphorylase (310 aa).

Catalysis depends on residues His-138 and Lys-159. 153–160 (GDSGIGKS) is an ATP binding site. Ser-160 provides a ligand contact to Mg(2+). Catalysis depends on Asp-177, which acts as the Proton acceptor; for phosphorylation activity. Proton donor; for dephosphorylation activity. The important for the catalytic mechanism of both phosphorylation and dephosphorylation stretch occupies residues 201–210 (LEIRGVGIID). Glu-202 lines the Mg(2+) pocket. Residue Arg-243 is part of the active site. Positions 264-269 (PVKTGR) are important for the catalytic mechanism of dephosphorylation.

The protein belongs to the HPrK/P family. As to quaternary structure, homohexamer. Mg(2+) serves as cofactor.

It catalyses the reaction [HPr protein]-L-serine + ATP = [HPr protein]-O-phospho-L-serine + ADP + H(+). The catalysed reaction is [HPr protein]-O-phospho-L-serine + phosphate + H(+) = [HPr protein]-L-serine + diphosphate. Functionally, catalyzes the ATP- as well as the pyrophosphate-dependent phosphorylation of a specific serine residue in HPr, a phosphocarrier protein of the phosphoenolpyruvate-dependent sugar phosphotransferase system (PTS). HprK/P also catalyzes the pyrophosphate-producing, inorganic phosphate-dependent dephosphorylation (phosphorolysis) of seryl-phosphorylated HPr (P-Ser-HPr). The two antagonistic activities of HprK/P are regulated by several intracellular metabolites, which change their concentration in response to the absence or presence of rapidly metabolisable carbon sources (glucose, fructose, etc.) in the growth medium. Therefore, by controlling the phosphorylation state of HPr, HPrK/P is a sensor enzyme that plays a major role in the regulation of carbon metabolism and sugar transport: it mediates carbon catabolite repression (CCR), and regulates PTS-catalyzed carbohydrate uptake and inducer exclusion. This chain is HPr kinase/phosphorylase, found in Streptococcus uberis (strain ATCC BAA-854 / 0140J).